Here is a 528-residue protein sequence, read N- to C-terminus: Major facilitator-type transporter psiT2 (528 aa).

Positions 1–20 (MSPERSASLEPDEHSSLLSD) are disordered. A run of 5 helical transmembrane segments spans residues 87 to 107 (FYSGLIESVFACGEVCSIFML), 125 to 145 (LGVALFTALFGLSTSFTMMLV), 148 to 168 (VCAGLLAGATPIVHSVVSELT), 174 to 194 (ALVVPLYGLITPIGFAIGPLI), and 220 to 240 (FLPSFVPCCLAVVGVTFGYFF). Residues 260–270 (STSSISSRTST) show a composition bias toward low complexity. The segment at 260–299 (STSSISSRTSTLYGATDDHNRDASESTALSPEEAEDEIDS) is disordered. A run of 6 helical transmembrane segments spans residues 322–342 (FLMFLYTSSDVLFSLYCFTAV), 357–377 (AFSVAGVIAMLMQLCITPWVL), 388–408 (FCMFSFPLVFALMGCLNPLAQ), 424–444 (GLLYAAIAVLLLLARVCVMAF), 460–479 (LATANGLVQVSMTIARALCP), and 493–513 (NILGGHLWVLIMVTISLAGVW).

The protein belongs to the major facilitator superfamily. TCR/Tet family.

The protein resides in the membrane. Functionally, major facilitator-type transporter; part of the gene cluster that mediates the biosynthesis of psilocybin, a psychotropic tryptamine-derived natural product. The protein is Major facilitator-type transporter psiT2 of Psilocybe cyanescens.